We begin with the raw amino-acid sequence, 79 residues long: Cytochrome c-551 (79 aa).

A compositionally biased stretch (polar residues) spans 1-14 (DGQSIYESGTSPTC). The interval 1–35 (DGQSIYESGTSPTCASCHDRGTAGAPKINEPGDWD) is disordered. Cys14, Cys17, His18, and Met55 together coordinate heme c.

Binds 1 heme c group covalently per subunit.

This chain is Cytochrome c-551, found in Halorhodospira halochloris (Ectothiorhodospira halochloris).